Here is a 139-residue protein sequence, read N- to C-terminus: Actin-depolymerizing factor 7 (139 aa).

One can recognise an ADF-H domain in the interval glycine 7 to asparagine 139.

It belongs to the actin-binding proteins ADF family.

Actin-depolymerizing protein. Severs actin filaments (F-actin) and binds to actin monomers. The chain is Actin-depolymerizing factor 7 (ADF7) from Oryza sativa subsp. japonica (Rice).